The chain runs to 378 residues: uncharacterized protein (378 aa).

The next 10 helical transmembrane spans lie at 7-29 (VTPFFFALALLNLLISLFIRLSQ), 33-55 (LFFVSLVFGFVGLTLMGAMYQII), 68-85 (VSYLVFFLILVSFYEFYT), 90-108 (SGSLFLFLGSLIFFFHLLL), 115-137 (PLTVRFLLASMIYLVLSALFLYL), 152-174 (LTVGSMLNAIYGVELAWIPMLIM), 204-225 (NYKLIALAGLLEFGVALYFLYL), 245-267 (IFLFALLFLPLGMLLGIFSASHA), 280-302 (LILYGFGAFTIFGGMLHLLPRIV), and 347-366 (FSPLHVISTVVYLVIMALFL).

Its subcellular location is the cell membrane. This is an uncharacterized protein from Aquifex aeolicus (strain VF5).